The following is a 222-amino-acid chain: Ras-related protein Rab11D (222 aa).

G22–S29 is a binding site for GTP. The Effector region motif lies at S44–F52. GTP is bound by residues D70–Q74 and N128–D131. Residues C219 and C220 are each lipidated (S-geranylgeranyl cysteine).

It belongs to the small GTPase superfamily. Rab family.

It localises to the cell membrane. The sequence is that of Ras-related protein Rab11D (RAB11D) from Nicotiana tabacum (Common tobacco).